The chain runs to 464 residues: MILANVFCLFFFLDETLRSLASPSSLQGPELHGWRPPVDCVRANELCAAESNCSSRYRTLRQCLAGRDRNTMLANKECQAALEVLQESPLYDCRCKRGMKKELQCLQIYWSIHLGLTEGEEFYEASPYEPVTSRLSDIFRLASIFSGTGADPVVSAKSNHCLDAAKACNLNDNCKKLRSSYISICNREISPTERCNRRKCHKALRQFFDRVPSEYTYRMLFCSCQDQACAERRRQTILPSCSYEDKEKPNCLDLRGVCRTDHLCRSRLADFHANCRASYQTVTSCPADNYQACLGSYAGMIGFDMTPNYVDSSPTGIVVSPWCSCRGSGNMEEECEKFLRDFTENPCLRNAIQAFGNGTDVNVSPKGPLFQATQAPRAEKTPSLPDDLSDSTSLGTSVITTCTSVQEQGLKANNSKELSMCFTELTTNIIPGSNKVIKPNSGPSRARPSAALTVLSVLMLKLAL.

Positions 1–21 (MILANVFCLFFFLDETLRSLA) are cleaved as a signal peptide. 14 cysteine pairs are disulfide-bonded: cysteine 40-cysteine 93, cysteine 47-cysteine 53, cysteine 63-cysteine 78, cysteine 95-cysteine 105, cysteine 161-cysteine 222, cysteine 168-cysteine 174, cysteine 185-cysteine 200, cysteine 195-cysteine 241, cysteine 224-cysteine 229, cysteine 251-cysteine 323, cysteine 258-cysteine 264, cysteine 275-cysteine 293, cysteine 285-cysteine 347, and cysteine 325-cysteine 335. Asparagine 52 carries N-linked (GlcNAc...) asparagine glycosylation. Asparagine 357 and asparagine 413 each carry an N-linked (GlcNAc...) asparagine glycan. Serine 444 is lipidated: GPI-anchor amidated serine. Positions 445 to 464 (RARPSAALTVLSVLMLKLAL) are cleaved as a propeptide — removed in mature form.

This sequence belongs to the GDNFR family. As to quaternary structure, interacts with NRTN ligand and RET: forms a 2:2:2 ternary complex composed of NRTN ligand, GFRA2 and RET receptor. Also forms a 4:4:4 tetrameric complex composed of 4 copies of NRTN ligand, GFRA2 and RET receptor, which prevents endocytosis of RET. Interacts with SORL1.

The protein localises to the cell membrane. Functionally, receptor for neurturin (NRTN), a growth factor that supports the survival of sympathetic neurons. NRTN-binding leads to autophosphorylation and activation of the RET receptor. Also able to mediate GDNF signaling through the RET tyrosine kinase receptor. In Pongo abelii (Sumatran orangutan), this protein is GDNF family receptor alpha-2 (GFRA2).